We begin with the raw amino-acid sequence, 75 residues long: Disintegrin CTF-II (75 aa).

The 75-residue stretch at 1–75 (ELLEEGEDCY…SDDCPRWNDL (75 aa)) folds into the Disintegrin domain. Disulfide bonds link cysteine 9/cysteine 24, cysteine 11/cysteine 19, cysteine 18/cysteine 41, cysteine 32/cysteine 38, cysteine 37/cysteine 62, and cysteine 50/cysteine 69. Positions 54–56 (RGD) match the Cell attachment site motif.

Belongs to the venom metalloproteinase (M12B) family. P-II subfamily. P-IIa sub-subfamily. As to quaternary structure, monomer (disintegrin). In terms of tissue distribution, expressed by the venom gland.

Its subcellular location is the secreted. Its function is as follows. Inhibits fibrinogen interaction with platelet receptors, and inhibits aggregation induced by ADP, thrombin, collagen and platelet-activating factor. Acts by binding to the alpha-IIb/beta-3 (ITGA2B/ITGB3) on the platelet surface. The sequence is that of Disintegrin CTF-II from Protobothrops flavoviridis (Habu).